Consider the following 511-residue polypeptide: Centrosomal protein CCDC61 (511 aa).

Met-1 bears the N-acetylmethionine mark. Residues 1 to 143 (MDQPAGLQVD…PLPLPYQGKP (143 aa)) are head domain. Coiled coils occupy residues 176–203 (IWHL…SREE) and 246–273 (SRRL…LNSE). Phosphothreonine is present on Thr-283. Disordered regions lie at residues 284 to 413 (LPPV…DSFR) and 429 to 476 (SHSV…GGWV). Residues 290 to 302 (REGRASSSRERST) show a composition bias toward basic and acidic residues. A phosphoserine mark is found at Ser-330 and Ser-332. Positions 360-369 (KQQQQQRNRM) are enriched in low complexity. 2 positions are modified to phosphoserine: Ser-371 and Ser-374. A compositionally biased stretch (basic residues) spans 433–442 (SRSRRCRGRG). Residue Ser-446 is modified to Phosphoserine. Residues 449–458 (PWSRSKTKST) show a composition bias toward polar residues. A Phosphoserine modification is found at Ser-472.

The protein belongs to the CCDC61 family. As to quaternary structure, forms homodimers (via head domain). Interacts with CEP170. Interacts with PCM1 and CEP131. Binds tubulin.

It is found in the cytoplasm. Its subcellular location is the cytoskeleton. It localises to the microtubule organizing center. The protein localises to the centrosome. The protein resides in the centriolar satellite. It is found in the cilium basal body. Its function is as follows. Microtubule-binding centrosomal protein required for centriole cohesion, independently of the centrosome-associated protein/CEP250 and rootletin/CROCC linker. In interphase, required for anchoring microtubule at the mother centriole subdistal appendages and for centrosome positioning. During mitosis, may be involved in spindle assembly and chromatin alignment by regulating the organization of spindle microtubules into a symmetrical structure. Plays a non-essential role in ciliogenesis. The chain is Centrosomal protein CCDC61 from Mus musculus (Mouse).